Consider the following 1037-residue polypeptide: Sodium/potassium exporting P-type ATPase cta3 (1037 aa).

Over 1–61 (MVTINISNPV…GVSAWKVLLR (61 aa)) the chain is Cytoplasmic. A helical transmembrane segment spans residues 62 to 82 (QVLNAMCVVLILAAALSFGTT). Aspartate 83 is a topological domain (extracellular). A helical membrane pass occupies residues 84 to 104 (WIEGGVISAIIVLNITVGFIQ). Residues 105–281 (EYKAEKTMDS…LNVGTPLQRK (177 aa)) are Cytoplasmic-facing. A helical membrane pass occupies residues 282–302 (LTVLAYILFCIAIILAIIVMA). Topologically, residues 303–313 (AHSFHVTNEVS) are extracellular. A helical transmembrane segment spans residues 314 to 334 (IYAISLGISIIPESLIAVLSI). Residues 335–760 (TMAMGQKNMS…GRRMFDNIMR (426 aa)) are Cytoplasmic-facing. Residue aspartate 368 is the 4-aspartylphosphate intermediate of the active site. The Mg(2+) site is built by aspartate 368 and threonine 370. ATP is bound by residues threonine 370, glutamate 468, lysine 520, arginine 559, threonine 620, glycine 621, aspartate 622, arginine 678, and lysine 684. Aspartate 703 contributes to the Mg(2+) binding site. Asparagine 706 is a binding site for ATP. A helical membrane pass occupies residues 761-781 (FVLHLLVSNVGEVILLVVGLA). Residues 782 to 787 (FRDEVH) are Extracellular-facing. The helical transmembrane segment at 788 to 808 (LSVFPMSPVEILWCNMITSSF) threads the bilayer. Residues 809–844 (PSMGLGMELAQPDVMERLPHDNKVGIFQKSLIVDMM) lie on the Cytoplasmic side of the membrane. Residues 845–865 (VYGFFLGVVSLMTWVVIMYGF) form a helical membrane-spanning segment. The Extracellular segment spans residues 866–889 (GTGNLSYDCNAHYHAGCNDVFKAR). N-linked (GlcNAc...) asparagine glycosylation is present at asparagine 869. A helical membrane pass occupies residues 890–910 (SAVFAVVTFCILIMAVEVKNF). Topologically, residues 911–939 (DNSLFNLHGIPWGEWNFRYFLHTLVENKF) are cytoplasmic. The chain crosses the membrane as a helical span at residues 940-960 (LAWAIALAAVSVFPTIYIPVI). Over 961 to 969 (NRDVFKHTY) the chain is Extracellular. Residues 970 to 990 (IGWEWGVVAVAVMFYFFYVEI) form a helical membrane-spanning segment. At 991–1037 (WKSIRRSLTNPQKKGKFRRTLSNTITTESKLSEKDLEHRLFLQSRRA) the chain is on the cytoplasmic side. Serine 1012 carries the phosphoserine modification.

Belongs to the cation transport ATPase (P-type) (TC 3.A.3) family. Type IID subfamily. Mg(2+) serves as cofactor. The active site is phosphorylated in presence of sodium or potassium and in conditions of higher pH. Not phosphorylated in presence of calcium ions.

It is found in the cell membrane. The enzyme catalyses Na(+)(in) + ATP + H2O = Na(+)(out) + ADP + phosphate + H(+). The catalysed reaction is K(+)(in) + ATP + H2O = K(+)(out) + ADP + phosphate + H(+). Functionally, catalyzes the hydrolysis of ATP coupled with the export of sodium and potassium from the cell. May export sodium less efficiently. May transport other cations such as lithium. Sodium/potassium efflux ATPases are involved in salt tolerance and maintaining the membrane potential across the plasma membrane in high salinity (Na+) or alkaline (K+) environments. This is Sodium/potassium exporting P-type ATPase cta3 from Schizosaccharomyces pombe (strain 972 / ATCC 24843) (Fission yeast).